Reading from the N-terminus, the 1066-residue chain is Coiled-coil domain-containing protein 73 (1066 aa).

Coiled coils occupy residues 47 to 134 and 178 to 391; these read KAET…QVSQ and LVRE…KTEE. Disordered stretches follow at residues 568-600, 719-811, 854-883, 944-978, and 1003-1027; these read LDTR…SNPF, SENS…PKSG, LSPA…PEKT, KNIE…EERN, and VQQS…PGNN. 5 stretches are compositionally biased toward polar residues: residues 591-600, 742-781, 789-811, 857-869, and 948-964; these read NTDGSESNPF, RTNT…TSQA, PLTT…PKSG, ATPS…TSAR, and SDPT…SNWS. A compositionally biased stretch (basic and acidic residues) spans 967–978; the sequence is LDPKGQPREERN. Polar residues predominate over residues 1003 to 1013; sequence VQQSHSQTVKV.

The protein is Coiled-coil domain-containing protein 73 (Ccdc73) of Mus musculus (Mouse).